The primary structure comprises 153 residues: Ribosome maturation factor RimP (153 aa).

It belongs to the RimP family.

It is found in the cytoplasm. Functionally, required for maturation of 30S ribosomal subunits. This is Ribosome maturation factor RimP from Coxiella burnetii (strain CbuG_Q212) (Coxiella burnetii (strain Q212)).